A 543-amino-acid chain; its full sequence is Serine/threonine-protein kinase Chk2 (543 aa).

The tract at residues 1–66 (MSRESDVEAQ…SGTLSSLETV (66 aa)) is disordered. The span at 8–22 (EAQQSHGSSACSQPH) shows a compositional bias: polar residues. A compositionally biased stretch (low complexity) spans 23 to 62 (GSVTQSQGSSSQSQGISSSSTSTMPNSSQSSHSSSGTLSS). Ser-62 carries the phosphoserine; by PLK3 modification. Phosphothreonine; by ATM and MAP3K20 is present on Thr-68. The residue at position 73 (Ser-73) is a Phosphoserine; by PLK3. Positions 113–175 (YWFGRDKSCE…NGTFVNTELV (63 aa)) constitute an FHA domain. Positions 220-486 (YIMSKTLGSG…TEEALRHPWL (267 aa)) constitute a Protein kinase domain. ATP is bound by residues 227 to 234 (GSGACGEV), Lys-249, and 302 to 308 (ELMEGGE). Asp-347 acts as the Proton acceptor in catalysis. ATP is bound by residues 351–352 (EN) and Asp-368. Positions 368–394 (DFGHSKILGETSLMRTLCGTPTYLAPE) are T-loop/activation segment. The residue at position 379 (Ser-379) is a Phosphoserine; by autocatalysis. 2 positions are modified to phosphothreonine; by autocatalysis: Thr-383 and Thr-387. Phosphoserine is present on Ser-456. Over residues 506-517 (TALPQVLAQPST) the composition is skewed to polar residues. The tract at residues 506–538 (TALPQVLAQPSTSRKRPREGEAEGAETTKRPAV) is disordered. Over residues 523-534 (REGEAEGAETTK) the composition is skewed to basic and acidic residues.

This sequence belongs to the protein kinase superfamily. CAMK Ser/Thr protein kinase family. CHK2 subfamily. As to quaternary structure, homodimer. Homodimerization is part of the activation process but the dimer may dissociate following activation. Interacts with PML. Interacts with TP53. Interacts with RB1; phosphorylates RB1. Interacts with BRCA1. Interacts (phosphorylated at Thr-68) with MDC1; requires ATM-mediated phosphorylation of CHEK2. Interacts with TP53BP1; modulates CHEK2 phosphorylation at Thr-68 in response to ionizing radiation. Interacts with CDC25A; phosphorylates CDC25A and mediates its degradation in response to ionizing radiation. Interacts with CUL1; mediates CHEK2 ubiquitination and regulation. Interacts with CDKN2AIP. Interacts (via protein kinase domain) with CCAR2 (via N-terminus). Interacts with SIRT1. Mg(2+) serves as cofactor. Phosphorylated. Phosphorylated at Ser-73 by PLK3 in response to DNA damage, promoting phosphorylation at Thr-68 by ATM and the G2/M transition checkpoint. Phosphorylation at Thr-68 induces homodimerization. Autophosphorylates at Thr-383 and Thr-387 in the T-loop/activation segment upon dimerization to become fully active and phosphorylate its substrates like for instance CDC25C. DNA damage-induced autophosphorylation at Ser-379 induces CUL1-mediated ubiquitination and regulates the pro-apoptotic function. Phosphorylation at Ser-456 also regulates ubiquitination. Phosphorylated by PLK4. Post-translationally, ubiquitinated. CUL1-mediated ubiquitination regulates the pro-apoptotic function. Ubiquitination may also regulate protein stability. Ubiquitinated by RNF8 via 'Lys-48'-linked ubiquitination. In terms of tissue distribution, high expression is found in testis, spleen, colon and peripheral blood leukocytes. Low expression is found in other tissues.

Its subcellular location is the nucleus. It localises to the PML body. The protein resides in the nucleoplasm. The enzyme catalyses L-seryl-[protein] + ATP = O-phospho-L-seryl-[protein] + ADP + H(+). It carries out the reaction L-threonyl-[protein] + ATP = O-phospho-L-threonyl-[protein] + ADP + H(+). With respect to regulation, activated through phosphorylation at Thr-68 by ATM in response to DNA double-strand breaks. Activation is modulated by several mediators including MDC1 and TP53BP1. Induces homodimerization with exchange of the T-loop/activation segment between protomers and transphosphorylation of the protomers. The autophosphorylated kinase dimer is fully active. Negatively regulated by PPM1D through dephosphorylation of Thr-68. Serine/threonine-protein kinase which is required for checkpoint-mediated cell cycle arrest, activation of DNA repair and apoptosis in response to the presence of DNA double-strand breaks. May also negatively regulate cell cycle progression during unperturbed cell cycles. Following activation, phosphorylates numerous effectors preferentially at the consensus sequence [L-X-R-X-X-S/T]. Regulates cell cycle checkpoint arrest through phosphorylation of CDC25A, CDC25B and CDC25C, inhibiting their activity. Inhibition of CDC25 phosphatase activity leads to increased inhibitory tyrosine phosphorylation of CDK-cyclin complexes and blocks cell cycle progression. May also phosphorylate NEK6 which is involved in G2/M cell cycle arrest. Regulates DNA repair through phosphorylation of BRCA2, enhancing the association of RAD51 with chromatin which promotes DNA repair by homologous recombination. Also stimulates the transcription of genes involved in DNA repair (including BRCA2) through the phosphorylation and activation of the transcription factor FOXM1. Regulates apoptosis through the phosphorylation of p53/TP53, MDM4 and PML. Phosphorylation of p53/TP53 at 'Ser-20' by CHEK2 may alleviate inhibition by MDM2, leading to accumulation of active p53/TP53. Phosphorylation of MDM4 may also reduce degradation of p53/TP53. Also controls the transcription of pro-apoptotic genes through phosphorylation of the transcription factor E2F1. Tumor suppressor, it may also have a DNA damage-independent function in mitotic spindle assembly by phosphorylating BRCA1. Its absence may be a cause of the chromosomal instability observed in some cancer cells. Promotes the CCAR2-SIRT1 association and is required for CCAR2-mediated SIRT1 inhibition. Under oxidative stress, promotes ATG7 ubiquitination by phosphorylating the E3 ubiquitin ligase TRIM32 at 'Ser-55' leading to positive regulation of the autophagosme assembly. Functionally, (Microbial infection) Phosphorylates herpes simplex virus 1/HHV-1 protein ICP0 and thus activates its SUMO-targeted ubiquitin ligase activity. In Homo sapiens (Human), this protein is Serine/threonine-protein kinase Chk2.